Reading from the N-terminus, the 374-residue chain is 3-isopropylmalate dehydrogenase (374 aa).

83–96 (GPKWDNLPPEIRPE) is an NAD(+) binding site. Residues Arg104, Arg114, Arg142, and Asp231 each coordinate substrate. Residues Asp231, Asp255, and Asp259 each coordinate Mg(2+). Residue 288 to 300 (GSAPDIAGQNKAN) coordinates NAD(+).

The protein belongs to the isocitrate and isopropylmalate dehydrogenases family. LeuB type 1 subfamily. As to quaternary structure, homodimer. Mg(2+) serves as cofactor. It depends on Mn(2+) as a cofactor.

Its subcellular location is the cytoplasm. It carries out the reaction (2R,3S)-3-isopropylmalate + NAD(+) = 4-methyl-2-oxopentanoate + CO2 + NADH. It participates in amino-acid biosynthesis; L-leucine biosynthesis; L-leucine from 3-methyl-2-oxobutanoate: step 3/4. Functionally, catalyzes the oxidation of 3-carboxy-2-hydroxy-4-methylpentanoate (3-isopropylmalate) to 3-carboxy-4-methyl-2-oxopentanoate. The product decarboxylates to 4-methyl-2 oxopentanoate. The polypeptide is 3-isopropylmalate dehydrogenase (Carboxydothermus hydrogenoformans (strain ATCC BAA-161 / DSM 6008 / Z-2901)).